A 590-amino-acid chain; its full sequence is Protein NRT1/ PTR FAMILY 8.5 (590 aa).

A helical transmembrane segment spans residues 96 to 116; the sequence is ASDVMIWQGTCYITPLIGAVI. Threonine 126 bears the Phosphothreonine mark. A run of 10 helical transmembrane segments spans residues 130–150, 168–188, 214–234, 242–262, 365–385, 401–421, 445–465, 478–498, 524–544, and 562–582; these read FSAI…LPVL, TVQY…TGGI, FFNW…TLLV, WGLG…SFFI, FPIW…STLF, IPPA…IPIY, MGIG…VETV, IFWQ…FFIG, AVGS…TALG, and FFWL…LICV.

Belongs to the major facilitator superfamily. Proton-dependent oligopeptide transporter (POT/PTR) (TC 2.A.17) family. Expressed in shoots, roots, stems, leaves, flowers and siliques.

The protein resides in the membrane. This Arabidopsis thaliana (Mouse-ear cress) protein is Protein NRT1/ PTR FAMILY 8.5 (NPF8.5).